We begin with the raw amino-acid sequence, 131 residues long: Large ribosomal subunit protein bL12 (131 aa).

This sequence belongs to the bacterial ribosomal protein bL12 family. As to quaternary structure, homodimer. Part of the ribosomal stalk of the 50S ribosomal subunit. Forms a multimeric L10(L12)X complex, where L10 forms an elongated spine to which 2 to 4 L12 dimers bind in a sequential fashion. Binds GTP-bound translation factors.

Its function is as follows. Forms part of the ribosomal stalk which helps the ribosome interact with GTP-bound translation factors. Is thus essential for accurate translation. This is Large ribosomal subunit protein bL12 from Prochlorococcus marinus (strain MIT 9301).